Here is a 799-residue protein sequence, read N- to C-terminus: 1,4-alpha-glucan-branching enzyme 2, chloroplastic/amyloplastic (799 aa).

The N-terminal 57 residues, 1–57, are a transit peptide targeting the chloroplast; sequence MAFRVSGAVLGGAVRAPRLTGGGEGSLVFRHTGLFLTRGARVGCSGTHGAMRAAAAA. Residues Trp-196 and Lys-232 each contribute to the (1,4-alpha-D-glucosyl)n site. Asp-447 functions as the Nucleophile in the catalytic mechanism. Glu-502 (proton donor) is an active-site residue.

Belongs to the glycosyl hydrolase 13 family. GlgB subfamily. In terms of assembly, monomer.

Its subcellular location is the plastid. It localises to the chloroplast. The protein resides in the amyloplast. The catalysed reaction is Transfers a segment of a (1-&gt;4)-alpha-D-glucan chain to a primary hydroxy group in a similar glucan chain.. It participates in glycan biosynthesis; starch biosynthesis. In terms of biological role, catalyzes the formation of the alpha-1,6-glucosidic linkages in starch by scission of a 1,4-alpha-linked oligosaccharide from growing alpha-1,4-glucan chains and the subsequent attachment of the oligosaccharide to the alpha-1,6 position. The polypeptide is 1,4-alpha-glucan-branching enzyme 2, chloroplastic/amyloplastic (SBE1) (Zea mays (Maize)).